Here is a 377-residue protein sequence, read N- to C-terminus: Ribosomal RNA large subunit methyltransferase G (377 aa).

Belongs to the methyltransferase superfamily. RlmG family.

It localises to the cytoplasm. The catalysed reaction is guanosine(1835) in 23S rRNA + S-adenosyl-L-methionine = N(2)-methylguanosine(1835) in 23S rRNA + S-adenosyl-L-homocysteine + H(+). Specifically methylates the guanine in position 1835 (m2G1835) of 23S rRNA. This chain is Ribosomal RNA large subunit methyltransferase G, found in Aeromonas salmonicida (strain A449).